The chain runs to 101 residues: Urease subunit beta (101 aa).

It belongs to the urease beta subunit family. Heterotrimer of UreA (gamma), UreB (beta) and UreC (alpha) subunits. Three heterotrimers associate to form the active enzyme.

The protein resides in the cytoplasm. It carries out the reaction urea + 2 H2O + H(+) = hydrogencarbonate + 2 NH4(+). Its pathway is nitrogen metabolism; urea degradation; CO(2) and NH(3) from urea (urease route): step 1/1. The chain is Urease subunit beta from Bradyrhizobium sp. (strain ORS 278).